Here is a 105-residue protein sequence, read N- to C-terminus: Large ribosomal subunit protein uL24 (105 aa).

The protein belongs to the universal ribosomal protein uL24 family. As to quaternary structure, part of the 50S ribosomal subunit.

In terms of biological role, one of two assembly initiator proteins, it binds directly to the 5'-end of the 23S rRNA, where it nucleates assembly of the 50S subunit. Functionally, one of the proteins that surrounds the polypeptide exit tunnel on the outside of the subunit. In Wolbachia sp. subsp. Brugia malayi (strain TRS), this protein is Large ribosomal subunit protein uL24.